The chain runs to 610 residues: Autophagy-related protein 22-1 (610 aa).

The interval 1 to 29 is disordered; the sequence is MIFTSTPPAPPPADAQQRQPRYPGEDTTP. Residues 41-61 traverse the membrane as a helical segment; it reads YGIAAEVFAVCGVGSFLPLTL. Asparagine 90 carries an N-linked (GlcNAc...) asparagine glycan. Transmembrane regions (helical) follow at residues 120–140, 153–173, and 177–197; these read SFAMYTFSLAVLVQALTLISF, LLLTFGLIGSVSSMLFVFISP, and ILGAILVVIGVTCLGSSFVVL. Residues 216-242 form a disordered region; the sequence is KTEGEELPHLDSSGEYTRSGSFNRGDN. Over residues 229–239 the composition is skewed to polar residues; it reads GEYTRSGSFNR. 4 helical membrane-spanning segments follow: residues 277-297, 310-330, 379-399, and 415-435; these read GVGLGYCAAVLVQVLSILLLF, TLPLRFVLLLVGIWWFSFTVV, VVIFLIAWFLLSDAMATVSGT, and VGLLSITATLSGMTGAFLWPV. Asparagine 445 carries an N-linked (GlcNAc...) asparagine glycan. A run of 4 helical transmembrane segments spans residues 450-470, 485-507, 527-547, and 550-570; these read LCIALFEIIPLYGMLAYIPLV, FPLGIVHGLVSGGLSSYCRSFFG, KGSSFIGPAVVGVLIDATGQV, and GFFFIAVLIVLPIPLIWMVNA. The disordered stretch occupies residues 586–610; sequence KSHGENSSEFGHPSEEAEGLLARNP. Asparagine 591 carries N-linked (GlcNAc...) asparagine glycosylation.

This sequence belongs to the ATG22 family.

The protein resides in the vacuole membrane. Its function is as follows. Vacuolar effluxer which mediate the efflux of amino acids resulting from autophagic degradation. The release of autophagic amino acids allows the maintenance of protein synthesis and viability during nitrogen starvation. The sequence is that of Autophagy-related protein 22-1 (atg22-1) from Aspergillus clavatus (strain ATCC 1007 / CBS 513.65 / DSM 816 / NCTC 3887 / NRRL 1 / QM 1276 / 107).